Consider the following 238-residue polypeptide: Sugar fermentation stimulation protein homolog (238 aa).

It belongs to the SfsA family.

This chain is Sugar fermentation stimulation protein homolog, found in Vibrio parahaemolyticus serotype O3:K6 (strain RIMD 2210633).